The following is a 375-amino-acid chain: DNA replication and repair protein RecF (375 aa).

Gly-34–Thr-41 provides a ligand contact to ATP.

It belongs to the RecF family.

It localises to the cytoplasm. Functionally, the RecF protein is involved in DNA metabolism; it is required for DNA replication and normal SOS inducibility. RecF binds preferentially to single-stranded, linear DNA. It also seems to bind ATP. This is DNA replication and repair protein RecF from Rhizobium rhizogenes (strain K84 / ATCC BAA-868) (Agrobacterium radiobacter).